A 744-amino-acid polypeptide reads, in one-letter code: Endonuclease MutS2 (744 aa).

315–322 serves as a coordination point for ATP; that stretch reads GPNMGGKT. The Smr domain occupies 668–743; that stretch reads VDLRGLTVAE…GHGVTVVALR (76 aa).

This sequence belongs to the DNA mismatch repair MutS family. MutS2 subfamily. As to quaternary structure, homodimer. Interacts with MutL. Binds to stalled ribosomes, contacting rRNA.

Nuclease activity is stimulated by interaction with MutL. ATPase activity is stimulated by dsDNA. Functionally, endonuclease that is involved in the suppression of homologous recombination and may thus have a key role in the control of bacterial genetic diversity. Cleaves the phosphate backbone of oligodeoxynucleotides non-sequence-specifically at the 3' side of the phosphates. Preferably incises the branched DNA structures, especially the D-loop structure over the Holliday junction. Has ATPase activity. Binds to dsDNA but not to ssDNA. Its function is as follows. Acts as a ribosome collision sensor, splitting the ribosome into its 2 subunits. Detects stalled/collided 70S ribosomes which it binds and splits by an ATP-hydrolysis driven conformational change. Acts upstream of the ribosome quality control system (RQC), a ribosome-associated complex that mediates the extraction of incompletely synthesized nascent chains from stalled ribosomes and their subsequent degradation. Probably generates substrates for RQC. This is Endonuclease MutS2 from Thermus thermophilus (strain ATCC 27634 / DSM 579 / HB8).